The sequence spans 482 residues: UDP-N-acetylmuramoyl-L-alanyl-D-glutamate--2,6-diaminopimelate ligase (482 aa).

Serine 24 provides a ligand contact to UDP-N-acetyl-alpha-D-muramoyl-L-alanyl-D-glutamate. ATP is bound at residue 105–111 (GTNGKTT). Residues 147–148 (TT), serine 174, glutamine 180, and arginine 182 each bind UDP-N-acetyl-alpha-D-muramoyl-L-alanyl-D-glutamate. An N6-carboxylysine modification is found at lysine 214. Meso-2,6-diaminopimelate-binding positions include arginine 378, 402 to 405 (DNPR), glycine 453, and glutamate 457. Residues 402 to 405 (DNPR) carry the Meso-diaminopimelate recognition motif motif.

The protein belongs to the MurCDEF family. MurE subfamily. Mg(2+) is required as a cofactor. In terms of processing, carboxylation is probably crucial for Mg(2+) binding and, consequently, for the gamma-phosphate positioning of ATP.

It is found in the cytoplasm. The catalysed reaction is UDP-N-acetyl-alpha-D-muramoyl-L-alanyl-D-glutamate + meso-2,6-diaminopimelate + ATP = UDP-N-acetyl-alpha-D-muramoyl-L-alanyl-gamma-D-glutamyl-meso-2,6-diaminopimelate + ADP + phosphate + H(+). It functions in the pathway cell wall biogenesis; peptidoglycan biosynthesis. Functionally, catalyzes the addition of meso-diaminopimelic acid to the nucleotide precursor UDP-N-acetylmuramoyl-L-alanyl-D-glutamate (UMAG) in the biosynthesis of bacterial cell-wall peptidoglycan. The sequence is that of UDP-N-acetylmuramoyl-L-alanyl-D-glutamate--2,6-diaminopimelate ligase from Lawsonia intracellularis (strain PHE/MN1-00).